The primary structure comprises 116 residues: Ribosome-binding factor A (116 aa).

It belongs to the RbfA family. As to quaternary structure, monomer. Binds 30S ribosomal subunits, but not 50S ribosomal subunits or 70S ribosomes.

It localises to the cytoplasm. One of several proteins that assist in the late maturation steps of the functional core of the 30S ribosomal subunit. Associates with free 30S ribosomal subunits (but not with 30S subunits that are part of 70S ribosomes or polysomes). Required for efficient processing of 16S rRNA. May interact with the 5'-terminal helix region of 16S rRNA. The chain is Ribosome-binding factor A from Enterococcus faecalis (strain ATCC 700802 / V583).